Reading from the N-terminus, the 1531-residue chain is DNA topoisomerase 2-alpha (1531 aa).

Residue Met-1 is modified to N-acetylmethionine. Ser-4 carries the phosphoserine modification. Residue Lys-17 forms a Glycyl lysine isopeptide (Lys-Gly) (interchain with G-Cter in SUMO2) linkage. ATP-binding positions include Asn-91, Asn-120, and 148–150; that span reads SSN. Glycyl lysine isopeptide (Lys-Gly) (interchain with G-Cter in SUMO2) cross-links involve residues Lys-156 and Lys-157. An ATP-binding site is contributed by 161–168; sequence GRNGYGAK. Lys-261 participates in a covalent cross-link: Glycyl lysine isopeptide (Lys-Gly) (interchain with G-Cter in SUMO2). Thr-282 carries the phosphothreonine modification. The interval 342 to 344 is interaction with DNA; it reads KKK. Lys-352 participates in a covalent cross-link: Glycyl lysine isopeptide (Lys-Gly) (interchain with G-Cter in SUMO2). 376–378 serves as a coordination point for ATP; it reads QTK. Glycyl lysine isopeptide (Lys-Gly) (interchain with G-Cter in SUMO2) cross-links involve residues Lys-386, Lys-397, Lys-416, Lys-418, Lys-425, and Lys-440. The Toprim domain occupies 455-572; the sequence is CTLILTEGDS…SLLRHRFLEE (118 aa). Glu-461 is a binding site for Mg(2+). Residues Lys-466, Lys-480, and Lys-529 each participate in a glycyl lysine isopeptide (Lys-Gly) (interchain with G-Cter in SUMO2) cross-link. Residues Asp-541 and Asp-543 each contribute to the Mg(2+) site. Residues Lys-584, Lys-599, Lys-614, Lys-622, Lys-625, Lys-632, Lys-639, Lys-655, Lys-662, and Lys-676 each participate in a glycyl lysine isopeptide (Lys-Gly) (interchain with G-Cter in SUMO2) cross-link. The 457-residue stretch at 715–1171 folds into the Topo IIA-type catalytic domain; it reads IPSMVDGLKP…SPSDLWKEDL (457 aa). Tyr-805 (O-(5'-phospho-DNA)-tyrosine intermediate) is an active-site residue. An interaction with DNA region spans residues 990–999; it reads KLQTSLTCNS. A Nuclear export signal motif is present at residues 1018–1028; sequence ILRDFFELRLK. Residue Lys-1075 forms a Glycyl lysine isopeptide (Lys-Gly) (interchain with G-Cter in SUMO2) linkage. Disordered stretches follow at residues 1090–1123 and 1184–1531; these read WKEA…DSGP and KEKQ…DDLF. Acidic residues predominate over residues 1099 to 1108; that stretch reads DEEENEESDN. Ser-1106 bears the Phosphoserine; by CK1 mark. Glycyl lysine isopeptide (Lys-Gly) (interchain with G-Cter in SUMO2) cross-links involve residues Lys-1114, Lys-1196, and Lys-1204. Thr-1205 carries the post-translational modification Phosphothreonine. Ser-1213 is subject to Phosphoserine. Lys-1228 participates in a covalent cross-link: Glycyl lysine isopeptide (Lys-Gly) (interchain with G-Cter in SUMO2). Lys-1240 is covalently cross-linked (Glycyl lysine isopeptide (Lys-Gly) (interchain with G-Cter in SUMO1); alternate). Lys-1240 participates in a covalent cross-link: Glycyl lysine isopeptide (Lys-Gly) (interchain with G-Cter in SUMO2); alternate. Thr-1244 carries the post-translational modification Phosphothreonine. A Phosphoserine modification is found at Ser-1247. The span at 1256 to 1272 shows a compositional bias: basic and acidic residues; it reads EGLKQRLEKKQKREPGT. Residues Lys-1259, Lys-1276, Lys-1283, and Lys-1286 each participate in a glycyl lysine isopeptide (Lys-Gly) (interchain with G-Cter in SUMO2) cross-link. A phosphoserine mark is found at Ser-1295, Ser-1297, Ser-1299, and Ser-1302. Thr-1327 bears the Phosphothreonine mark. Acidic residues predominate over residues 1330–1349; it reads LDSDEDFSDFDEKTDDEDFV. Residues Ser-1332 and Ser-1337 each carry the phosphoserine modification. Thr-1343 is subject to Phosphothreonine; by PLK3. Ser-1351 and Ser-1354 each carry phosphoserine. Residues Lys-1363, Lys-1367, and Lys-1373 each participate in a glycyl lysine isopeptide (Lys-Gly) (interchain with G-Cter in SUMO2) cross-link. Residues Ser-1374 and Ser-1377 each carry the phosphoserine modification. Lys-1385 is covalently cross-linked (Glycyl lysine isopeptide (Lys-Gly) (interchain with G-Cter in SUMO2)). 4 positions are modified to phosphoserine: Ser-1387, Ser-1391, Ser-1392, and Ser-1393. Positions 1406–1431 are enriched in low complexity; the sequence is TNPVPKKNVTVKKTAAKSQSSTSTTG. A Glycyl lysine isopeptide (Lys-Gly) (interchain with G-Cter in SUMO2); alternate cross-link involves residue Lys-1422. Lys-1422 is modified (N6-acetyllysine; alternate). Positions 1433-1439 are interaction with PLSCR1; it reads KKRAAPK. Lys-1442 participates in a covalent cross-link: Glycyl lysine isopeptide (Lys-Gly) (interchain with G-Cter in SUMO2); alternate. Lys-1442 bears the N6-acetyllysine; alternate mark. Ser-1449 is subject to Phosphoserine. Residues Lys-1454 and Lys-1459 each participate in a glycyl lysine isopeptide (Lys-Gly) (interchain with G-Cter in SUMO2) cross-link. Position 1469 is a phosphoserine; by CK2 (Ser-1469). Thr-1470 carries the phosphothreonine modification. Phosphoserine is present on residues Ser-1471, Ser-1474, and Ser-1476. Residues Lys-1484 and Lys-1492 each participate in a glycyl lysine isopeptide (Lys-Gly) (interchain with G-Cter in SUMO2) cross-link. Basic and acidic residues predominate over residues 1491-1502; it reads SKGESDDFHMDF. Phosphoserine occurs at positions 1495, 1504, and 1525.

This sequence belongs to the type II topoisomerase family. In terms of assembly, homodimer. Interacts with COPS5. Interacts with RECQL5; this stimulates DNA decatenation. Interacts with SETMAR; stimulates the topoisomerase activity. Interacts with DHX9; this interaction occurs in a E2 enzyme UBE2I- and RNA-dependent manner, negatively regulates DHX9-mediated double-stranded DNA and RNA duplex helicase activity and stimulates TOP2A-mediated supercoiled DNA relaxation activity. Interacts with HNRNPU (via C-terminus); this interaction protects the topoisomerase TOP2A from degradation and positively regulates the relaxation of supercoiled DNA in a RNA-dependent manner. Interacts with MCM3AP isoform GANP. Interacts with ERCC6. Interacts with PLSCR1. Interacts with GCNA; this interaction allows the resolution of topoisomerase II (TOP2A) DNA-protein cross-links. Interacts with POL1RA/RPA1 (via dock II) and UBTF in the context of Pol I complex; may assist Pol I transcription initiation by releasing supercoils occurring during DNA unwinding. Interacts with TPRN; TPRN interacts with a number of DNA damage response proteins, is recruited to sites of DNA damage and may play a role in DNA damage repair. The cofactor is Mg(2+). Requires Mn(2+) as cofactor. It depends on Ca(2+) as a cofactor. Post-translationally, phosphorylation has no effect on catalytic activity. However, phosphorylation at Ser-1106 by CSNK1D/CK1 promotes DNA cleavable complex formation. In terms of processing, (Microbial infection) Deubiquitinated by Epstein-Barr virus BPLF1; leading to stabilized SUMOylated TOP2A trapped in cleavage complexes, which halts the DNA damage response to TOP2A-induced double-strand DNA breaks. SUMOylated. As to expression, expressed in the tonsil, spleen, lymph node, thymus, skin, pancreas, testis, colon, kidney, liver, brain and lung. Also found in high-grade lymphomas, squamous cell lung tumors and seminomas.

The protein localises to the cytoplasm. It localises to the nucleus. Its subcellular location is the nucleoplasm. It is found in the nucleolus. The enzyme catalyses ATP-dependent breakage, passage and rejoining of double-stranded DNA.. Specifically inhibited by the intercalating agent amsacrine. Functionally, key decatenating enzyme that alters DNA topology by binding to two double-stranded DNA molecules, generating a double-stranded break in one of the strands, passing the intact strand through the broken strand, and religating the broken strand. May play a role in regulating the period length of BMAL1 transcriptional oscillation. The chain is DNA topoisomerase 2-alpha (TOP2A) from Homo sapiens (Human).